The chain runs to 473 residues: Mediator of RNA polymerase II transcription subunit 29 (473 aa).

Residues 1–12 are compositionally biased toward polar residues; the sequence is MSGQGPPSNLTP. Disordered regions lie at residues 1–319 and 444–473; these read MSGQ…NEEQ and STMEKMRRRQKKWKDQQQQQENAEDAEMAE. Residues 13 to 50 are compositionally biased toward low complexity; sequence QQQHMIMQQQQQQQMMRQQQIQQQQLHQRQLQQQQAQQ. Positions 51-62 are enriched in polar residues; sequence SYQRSRTPQMQQ. 2 stretches are compositionally biased toward low complexity: residues 111–123 and 130–139; these read QMMQQQMGMNQPM and VSRPGSVAPP. 2 stretches are compositionally biased toward polar residues: residues 148 to 183 and 255 to 269; these read TGPSSNQMDQMGGQSQYSHHLQPQQPLSRPGSQQSH and PPGSAQAPSSVQPGS. Low complexity-rich tracts occupy residues 272-286 and 294-308; these read APGSLQAPASQQPPA and AASGSVAGPASAAPA.

It belongs to the Mediator complex subunit 29 family. In terms of assembly, component of the Mediator complex.

It localises to the nucleus. Functionally, component of the Mediator complex, a coactivator involved in the regulated transcription of nearly all RNA polymerase II-dependent genes. Mediator functions as a bridge to convey information from gene-specific regulatory proteins to the basal RNA polymerase II transcription machinery. Mediator is recruited to promoters by direct interactions with regulatory proteins and serves as a scaffold for the assembly of a functional preinitiation complex with RNA polymerase II and the general transcription factors. The chain is Mediator of RNA polymerase II transcription subunit 29 (mdt-29) from Caenorhabditis briggsae.